A 227-amino-acid chain; its full sequence is Cytochrome c oxidase subunit 2 (227 aa).

Residues 1–14 (MAYPFQLGLQDATS) are Mitochondrial intermembrane-facing. A helical membrane pass occupies residues 15–45 (PIMEELLHFHDHTLMIVFLISSLVLYIISLM). Over 46–59 (LTTKLTHTSTMDAQ) the chain is Mitochondrial matrix. Residues 60-87 (EVETVWTILPAIILILIALPSLRILYMM) form a helical membrane-spanning segment. Topologically, residues 88–227 (DEINNPSLTV…YFETWSAVMV (140 aa)) are mitochondrial intermembrane. Cu cation is bound by residues H161, C196, E198, C200, H204, and M207. E198 lines the Mg(2+) pocket. Y218 is subject to Phosphotyrosine.

It belongs to the cytochrome c oxidase subunit 2 family. As to quaternary structure, component of the cytochrome c oxidase (complex IV, CIV), a multisubunit enzyme composed of 14 subunits. The complex is composed of a catalytic core of 3 subunits MT-CO1, MT-CO2 and MT-CO3, encoded in the mitochondrial DNA, and 11 supernumerary subunits COX4I, COX5A, COX5B, COX6A, COX6B, COX6C, COX7A, COX7B, COX7C, COX8 and NDUFA4, which are encoded in the nuclear genome. The complex exists as a monomer or a dimer and forms supercomplexes (SCs) in the inner mitochondrial membrane with NADH-ubiquinone oxidoreductase (complex I, CI) and ubiquinol-cytochrome c oxidoreductase (cytochrome b-c1 complex, complex III, CIII), resulting in different assemblies (supercomplex SCI(1)III(2)IV(1) and megacomplex MCI(2)III(2)IV(2)). Found in a complex with TMEM177, COA6, COX18, COX20, SCO1 and SCO2. Interacts with TMEM177 in a COX20-dependent manner. Interacts with COX20. Interacts with COX16. Requires Cu cation as cofactor.

It localises to the mitochondrion inner membrane. The catalysed reaction is 4 Fe(II)-[cytochrome c] + O2 + 8 H(+)(in) = 4 Fe(III)-[cytochrome c] + 2 H2O + 4 H(+)(out). Component of the cytochrome c oxidase, the last enzyme in the mitochondrial electron transport chain which drives oxidative phosphorylation. The respiratory chain contains 3 multisubunit complexes succinate dehydrogenase (complex II, CII), ubiquinol-cytochrome c oxidoreductase (cytochrome b-c1 complex, complex III, CIII) and cytochrome c oxidase (complex IV, CIV), that cooperate to transfer electrons derived from NADH and succinate to molecular oxygen, creating an electrochemical gradient over the inner membrane that drives transmembrane transport and the ATP synthase. Cytochrome c oxidase is the component of the respiratory chain that catalyzes the reduction of oxygen to water. Electrons originating from reduced cytochrome c in the intermembrane space (IMS) are transferred via the dinuclear copper A center (CU(A)) of subunit 2 and heme A of subunit 1 to the active site in subunit 1, a binuclear center (BNC) formed by heme A3 and copper B (CU(B)). The BNC reduces molecular oxygen to 2 water molecules using 4 electrons from cytochrome c in the IMS and 4 protons from the mitochondrial matrix. The protein is Cytochrome c oxidase subunit 2 (MT-CO2) of Lycalopex vetulus (Hoary fox).